Reading from the N-terminus, the 95-residue chain is uncharacterized protein (95 aa).

Phosphate is bound at residue lysine 21. Residue aspartate 44 participates in Mg(2+) binding. Residue asparagine 47 coordinates phosphate.

It belongs to the HAD-like hydrolase superfamily. Cof family. The cofactor is Mg(2+).

This is an uncharacterized protein from Geobacillus stearothermophilus (Bacillus stearothermophilus).